The primary structure comprises 177 residues: Dual-action ribosomal maturation protein DarP (177 aa).

The segment covering 1 to 12 (MKIVGDSEHFKQ) has biased composition (basic and acidic residues). Residues 1–26 (MKIVGDSEHFKQPYDSNDEYVSKTED) are disordered.

This sequence belongs to the DarP family.

It localises to the cytoplasm. Functionally, member of a network of 50S ribosomal subunit biogenesis factors which assembles along the 30S-50S interface, preventing incorrect 23S rRNA structures from forming. Promotes peptidyl transferase center (PTC) maturation. The protein is Dual-action ribosomal maturation protein DarP of Shewanella oneidensis (strain ATCC 700550 / JCM 31522 / CIP 106686 / LMG 19005 / NCIMB 14063 / MR-1).